Reading from the N-terminus, the 901-residue chain is HTH-type transcriptional regulator MalT (901 aa).

39–46 (SPAGYGKT) contributes to the ATP binding site. The HTH luxR-type domain occupies 829 to 894 (ELIHTSPLTQ…AAVQHAQKLL (66 aa)). A DNA-binding region (H-T-H motif) is located at residues 853–872 (NEQIAGELEVAATTIKTHIR).

It belongs to the MalT family. In terms of assembly, monomer in solution. Oligomerizes to an active state in the presence of the positive effectors ATP and maltotriose.

With respect to regulation, activated by ATP and maltotriose, which are both required for DNA binding. Its function is as follows. Positively regulates the transcription of the maltose regulon whose gene products are responsible for uptake and catabolism of malto-oligosaccharides. Specifically binds to the promoter region of its target genes, recognizing a short DNA motif called the MalT box. The polypeptide is HTH-type transcriptional regulator MalT (Shigella sonnei (strain Ss046)).